Consider the following 125-residue polypeptide: Calcitonin receptor-stimulating peptide 2 (125 aa).

The first 25 residues, 1 to 25 (MGFWKFLPFLVLSFLVVYQAGMFQA), serve as a signal peptide directing secretion. The propeptide occupies 26–77 (APFRSALENDFDPAILTEKEMCLLLAAVMNDYVQMKTSELKQEAEHFHITAQ). A disulfide bond links C81 and C86.

Belongs to the calcitonin family.

It localises to the secreted. The polypeptide is Calcitonin receptor-stimulating peptide 2 (CRSP2) (Capra hircus (Goat)).